Here is a 209-residue protein sequence, read N- to C-terminus: Ion-translocating oxidoreductase complex subunit G (209 aa).

Residues G9 to L29 form a helical membrane-spanning segment. The residue at position 175 (T175) is an FMN phosphoryl threonine.

It belongs to the RnfG family. The complex is composed of six subunits: RnfA, RnfB, RnfC, RnfD, RnfE and RnfG. FMN serves as cofactor.

It is found in the cell inner membrane. In terms of biological role, part of a membrane-bound complex that couples electron transfer with translocation of ions across the membrane. This is Ion-translocating oxidoreductase complex subunit G from Photorhabdus laumondii subsp. laumondii (strain DSM 15139 / CIP 105565 / TT01) (Photorhabdus luminescens subsp. laumondii).